We begin with the raw amino-acid sequence, 335 residues long: NmrA-like family domain-containing oxidoreductase lnbB (335 aa).

NADP(+) is bound by residues 14–18, 41–45, 62–63, 83–85, Lys142, and 166–169; these read GTGNQ, RHPDS, DG, TNS, and YYEQ.

Belongs to the NmrA-type oxidoreductase family.

It participates in secondary metabolite biosynthesis. Functionally, nmrA-like family domain-containing oxidoreductase; part of the lnb gene cluster that mediates the biosynthesis of diastereomeric piperazines. Lna and lnb clusters encode sets of enzymes that produce overlapping sets of previously undescribed metabolites such as piperazinomycin-like metabolites or morpholine. The lna and lnb biosynthetic pathways appear to be part of a signaling network that controls the formation of sclerotia, a resilient overwintering structure. One primary function of the non-canonical nonribosomal peptide synthetases lnaA and lnbA consists in the reduction of L-tyrosine. The presence in the clusters of tailoring enzymes such as the oxidoreductases lnaB, lnbB, lnaE or lnbE, as well as of the cytochrome P450 monooxygenases lnaC, lnaD, or lnbC, might explain formation of various diastereomeric piperazines. This is NmrA-like family domain-containing oxidoreductase lnbB from Aspergillus flavus (strain ATCC 200026 / FGSC A1120 / IAM 13836 / NRRL 3357 / JCM 12722 / SRRC 167).